A 122-amino-acid chain; its full sequence is Holo-[acyl-carrier-protein] synthase (122 aa).

Residues Asp8 and Glu57 each coordinate Mg(2+).

This sequence belongs to the P-Pant transferase superfamily. AcpS family. Requires Mg(2+) as cofactor.

The protein resides in the cytoplasm. It carries out the reaction apo-[ACP] + CoA = holo-[ACP] + adenosine 3',5'-bisphosphate + H(+). In terms of biological role, transfers the 4'-phosphopantetheine moiety from coenzyme A to a Ser of acyl-carrier-protein. This Protochlamydia amoebophila (strain UWE25) protein is Holo-[acyl-carrier-protein] synthase.